The following is a 198-amino-acid chain: Inner membrane-spanning protein YciB (198 aa).

Helical transmembrane passes span 36-56, 67-87, 90-110, 135-155, and 162-182; these read IYSA…ALFI, LTLI…SETF, WKAP…HFIG, IAWI…AFTF, and FKVF…GIYL.

It belongs to the YciB family.

The protein resides in the cell inner membrane. Functionally, plays a role in cell envelope biogenesis, maintenance of cell envelope integrity and membrane homeostasis. In Pseudomonas fluorescens (strain Pf0-1), this protein is Inner membrane-spanning protein YciB.